Here is a 395-residue protein sequence, read N- to C-terminus: Demethylmacrocin O-methyltransferase (395 aa).

The enzyme catalyses demethylmacrocin + S-adenosyl-L-methionine = macrocin + S-adenosyl-L-homocysteine + H(+). Its pathway is antibiotic biosynthesis; tylosin biosynthesis. Functionally, O-methyltransferase that catalyzes the conversion of demethylmacrocin to macrocin, the penultimate step of tylosin antibiotic biosynthesis. Also able to mediate the conversion of demethyllactenocin to lactenocin. The polypeptide is Demethylmacrocin O-methyltransferase (tylE) (Streptomyces fradiae (Streptomyces roseoflavus)).